The chain runs to 340 residues: MSIPRPKLALTLGDPAGIGPEIVLKALADPEVQSCAHITVVGDRQVLEATYRLLRDRSPAPLAHPAGIPMLECDTGFRLQPGCIGQGDADSGAVSFAYLRTAVERTLQGEFQGIVTAPIAKYLWHRAGHRFPGQTEVLAQLSRSEHYGMMFVARSPHSGWQMRVLLATTHIPLGQVPTVLTPERVRTALDLLVGSLRHTFGIPDPVIAVAGLNPHAGEQGQLGSEEKEWLTELLRTYAHAQIWGPLPPDTMWLAPAQAWHGQGSPAVADAYLALYHDQGLIPVKMLAFDRAVNLTTGLPFVRTSPDHGTAFDIAGQGVARCESLKQAILLAAELLGKNPS.

Substrate is bound at residue threonine 135. Positions 170, 215, and 276 each coordinate a divalent metal cation. The substrate site is built by lysine 284, asparagine 293, and arginine 302.

This sequence belongs to the PdxA family. As to quaternary structure, homodimer. The cofactor is a divalent metal cation.

It localises to the cytoplasm. The catalysed reaction is 4-(phosphooxy)-L-threonine + NAD(+) = 3-amino-2-oxopropyl phosphate + CO2 + NADH. Its pathway is cofactor biosynthesis; pyridoxine 5'-phosphate biosynthesis; pyridoxine 5'-phosphate from D-erythrose 4-phosphate: step 4/5. In terms of biological role, catalyzes the NAD(P)-dependent oxidation of 4-(phosphooxy)-L-threonine (HTP) into 2-amino-3-oxo-4-(phosphooxy)butyric acid which spontaneously decarboxylates to form 3-amino-2-oxopropyl phosphate (AHAP). This Synechococcus sp. (strain JA-2-3B'a(2-13)) (Cyanobacteria bacterium Yellowstone B-Prime) protein is 4-hydroxythreonine-4-phosphate dehydrogenase.